The following is a 422-amino-acid chain: Serine hydroxymethyltransferase (422 aa).

(6S)-5,6,7,8-tetrahydrofolate contacts are provided by residues leucine 120 and glycine 124–leucine 126. Lysine 228 is subject to N6-(pyridoxal phosphate)lysine.

This sequence belongs to the SHMT family. In terms of assembly, homodimer. It depends on pyridoxal 5'-phosphate as a cofactor.

It localises to the cytoplasm. It catalyses the reaction (6R)-5,10-methylene-5,6,7,8-tetrahydrofolate + glycine + H2O = (6S)-5,6,7,8-tetrahydrofolate + L-serine. It participates in one-carbon metabolism; tetrahydrofolate interconversion. The protein operates within amino-acid biosynthesis; glycine biosynthesis; glycine from L-serine: step 1/1. Its function is as follows. Catalyzes the reversible interconversion of serine and glycine with tetrahydrofolate (THF) serving as the one-carbon carrier. This reaction serves as the major source of one-carbon groups required for the biosynthesis of purines, thymidylate, methionine, and other important biomolecules. Also exhibits THF-independent aldolase activity toward beta-hydroxyamino acids, producing glycine and aldehydes, via a retro-aldol mechanism. In Actinobacillus succinogenes (strain ATCC 55618 / DSM 22257 / CCUG 43843 / 130Z), this protein is Serine hydroxymethyltransferase.